The chain runs to 382 residues: Na(+)/H(+) antiporter NhaA (382 aa).

The next 11 helical transmembrane spans lie at 14-34, 49-69, 87-107, 117-137, 146-166, 171-191, 205-225, 252-272, 285-305, 321-341, and 356-376; these read AGGI…NSSL, MSVS…LIGL, IFPA…YVAF, GWAI…ALLG, VFLL…IAFF, LSVL…LLNA, FILW…GVVL, VAFA…LEGV, VALG…YLAV, IFAV…ISSL, and LGIL…LSIS.

The protein belongs to the NhaA Na(+)/H(+) (TC 2.A.33) antiporter family.

The protein localises to the cell inner membrane. The enzyme catalyses Na(+)(in) + 2 H(+)(out) = Na(+)(out) + 2 H(+)(in). Its function is as follows. Na(+)/H(+) antiporter that extrudes sodium in exchange for external protons. In Aliivibrio fischeri (strain ATCC 700601 / ES114) (Vibrio fischeri), this protein is Na(+)/H(+) antiporter NhaA.